Here is a 71-residue protein sequence, read N- to C-terminus: uncharacterized protein (71 aa).

This is an uncharacterized protein from Enterobacteria phage T4 (Bacteriophage T4).